The following is a 199-amino-acid chain: UPF0301 protein Daci_1578 (199 aa).

This sequence belongs to the UPF0301 (AlgH) family.

The protein is UPF0301 protein Daci_1578 of Delftia acidovorans (strain DSM 14801 / SPH-1).